The primary structure comprises 334 residues: Putative lysine N-acyltransferase C17G9.06c (334 aa).

Residue His248 coordinates substrate. Glu286 acts as the Proton acceptor in catalysis.

The protein belongs to the lysine N-acyltransferase mbtK family.

It localises to the cytoplasm. The protein resides in the nucleus. The sequence is that of Putative lysine N-acyltransferase C17G9.06c from Schizosaccharomyces pombe (strain 972 / ATCC 24843) (Fission yeast).